Reading from the N-terminus, the 120-residue chain is MSDTITSASATARYVRVTPMKARRVIDLVRGKSVAEALAILKYAPQGAAEPVAKVVASAAANAENNFGLDPRTLVISEAYANEGPTMRRFQPRAQGRAFMIRKRTSHITVVVESQKEGAK.

Belongs to the universal ribosomal protein uL22 family. Part of the 50S ribosomal subunit.

This protein binds specifically to 23S rRNA; its binding is stimulated by other ribosomal proteins, e.g. L4, L17, and L20. It is important during the early stages of 50S assembly. It makes multiple contacts with different domains of the 23S rRNA in the assembled 50S subunit and ribosome. Functionally, the globular domain of the protein is located near the polypeptide exit tunnel on the outside of the subunit, while an extended beta-hairpin is found that lines the wall of the exit tunnel in the center of the 70S ribosome. This chain is Large ribosomal subunit protein uL22, found in Corynebacterium aurimucosum (strain ATCC 700975 / DSM 44827 / CIP 107346 / CN-1) (Corynebacterium nigricans).